We begin with the raw amino-acid sequence, 774 residues long: MSEAARDLSPGAPPAVAAAAPEERKGKEPEREKLPPIVTAGAAAGLDRGSKGQISTFSSFVSTVTQKKEAAENRSSPTHLALPNIRNVRDLPPICLDVRQKQRMSVEALPSEVKVPPLPEPSLPSQPKTVKDFEEDLEKAEATGNWKTVHAFYITAFDSFTELNTAFKKDATASFNTIEDSGLNANLVNAVFDALLNTPQDIQKSVLKGIINSLLQEWKGPRTKDDLRAYFILLQNPQFNITSTYVIYAHLLRQIATLVEADHHFLVHWLKKLSQKKFKQLVERLLQFVSLRLFPAKPEEFPPLTKCTWWIPSAAKVLALLNTANNLVHPPLVPYTDFYNSTLDHIDLMEEYHTWQSFGNSHRFSFCQYPFVISIAAKKIIIQRDSEQQMISIARQSLVDKVSRRQRPDMNMLFLNMKVRRTHLVSDSLDELTRKRADLKKKLKVTFVGEAGLDMGGLTKEWFLLLIRQIFHPDYGMFTYHKDSHCHWFSSFKCDNYSEFRLVGILMGLAVYNSITLDIRFPPCCYKKLLSPPVVPSDQSTPVGICSVTIDDLCQVMPELAHGLKELLSYEGNVEEDFYSTFQVFQEEFGVIKSYNLKPGGDKIPVTNQNRREYVQLYTDFLLNKSIYKQFAAFYCGFHSVCASNALMLLRPEEVEILVCGSPELDMHALQRSTQYDGYAKTDLTIRYFWDVVLGFPLELQKKLLHFTTGSDRVPVGGMADLNFKISKNETSTNWLPVAHTCFNQLCLPPYKSKKDLKQKLIIGISNSEGFGLE.

The segment at 1-51 is disordered; the sequence is MSEAARDLSPGAPPAVAAAAPEERKGKEPEREKLPPIVTAGAAAGLDRGSK. Serine 9 carries the post-translational modification Phosphoserine. Basic and acidic residues predominate over residues 21–34; sequence PEERKGKEPEREKL. The HECT domain occupies 435–774; sequence KRADLKKKLK…ISNSEGFGLE (340 aa). Cysteine 742 (glycyl thioester intermediate) is an active-site residue.

The catalysed reaction is S-ubiquitinyl-[E2 ubiquitin-conjugating enzyme]-L-cysteine + [acceptor protein]-L-lysine = [E2 ubiquitin-conjugating enzyme]-L-cysteine + N(6)-ubiquitinyl-[acceptor protein]-L-lysine.. Its pathway is protein modification; protein ubiquitination. E3 ubiquitin-protein ligase which accepts ubiquitin from an E2 ubiquitin-conjugating enzyme in the form of a thioester and then directly transfers the ubiquitin to targeted substrates. The polypeptide is Probable E3 ubiquitin-protein ligase HECTD2 (Hectd2) (Mus musculus (Mouse)).